The chain runs to 350 residues: MSKNKLSKGQQRRVNANHQRRLKTSKEKPDYDDNLFGEPDEGIVISRFGMHADVESADGDVHRCNIRRTIRSLVTGDRVVWRPGKPAAEGVNVKGIVEAVHERTSVLTRPDFYDGVKPIAANIDQIVIVSAILPELSLNIIDRYLVACETLQIEPIIVLNKIDLLDDEGMKFVNEQMDIYRNIGYRVLMVSSHTQDGLKPLEEALTGRISIFAGQSGVGKSSLLNALLGLQKEILTNDVSDNSGLGQHTTTAARLYHFPHGGDVIDSPGVREFGLWHLEPEQITQGFVEFHDYLGLCKYRDCKHDTDPGCAIREAVEEGKIAETRFENYHRILESMAQVKTRKNFSDTDD.

Over residues 1-17 the composition is skewed to polar residues; it reads MSKNKLSKGQQRRVNAN. The interval 1–33 is disordered; sequence MSKNKLSKGQQRRVNANHQRRLKTSKEKPDYDD. Residues 104 to 273 enclose the CP-type G domain; it reads TSVLTRPDFY…VIDSPGVREF (170 aa). Residues 160 to 163 and 214 to 222 contribute to the GTP site; these read NKID and GQSGVGKSS. Cys-297, Cys-302, His-304, and Cys-310 together coordinate Zn(2+).

This sequence belongs to the TRAFAC class YlqF/YawG GTPase family. RsgA subfamily. As to quaternary structure, monomer. Associates with 30S ribosomal subunit, binds 16S rRNA. It depends on Zn(2+) as a cofactor.

Its subcellular location is the cytoplasm. One of several proteins that assist in the late maturation steps of the functional core of the 30S ribosomal subunit. Helps release RbfA from mature subunits. May play a role in the assembly of ribosomal proteins into the subunit. Circularly permuted GTPase that catalyzes slow GTP hydrolysis, GTPase activity is stimulated by the 30S ribosomal subunit. The chain is Small ribosomal subunit biogenesis GTPase RsgA from Escherichia coli (strain SMS-3-5 / SECEC).